The following is a 1189-amino-acid chain: RAB11-binding protein RELCH homolog (1189 aa).

Disordered regions lie at residues 1 to 65 (MAAG…PSVD) and 123 to 154 (SNPG…RAGS). Over residues 19–36 (EQRQDGADTERSPSDEAQ) the composition is skewed to basic and acidic residues. Over residues 124–134 (NPGNFERQSGT) the composition is skewed to polar residues. The stretch at 172–205 (RESDERVAVLEFELRKAKETIQALRANLTQAAEC) forms a coiled coil. A LisH domain is found at 229 to 261 (EKRALNFLVNEYLLKNEYKLTSITFSDENDDQD). The stretch at 326-373 (QQQQEVVQELEYQISLLNSEKQSLAEQIKKLQSDIQALQRNVSSELTA) forms a coiled coil. Positions 374–453 (GVKSIQSKEN…QSKSSVQFDQ (80 aa)) are disordered. Low complexity predominate over residues 404 to 425 (ETDSSSDTTKTSTSTTIATDCT). Polar residues predominate over residues 426–453 (ENSTTATQPHSKLKANGQQSKSSVQFDQ). HEAT repeat units lie at residues 574–612 (LLPQ…RSSL), 613–652 (VLSM…KYSQ), and 977–1015 (VVPA…LLER).

Its subcellular location is the recycling endosome. It localises to the golgi apparatus. The protein resides in the trans-Golgi network. Its function is as follows. May regulate intracellular cholesterol transport. In Danio rerio (Zebrafish), this protein is RAB11-binding protein RELCH homolog (relch).